A 540-amino-acid chain; its full sequence is Chaperonin GroEL (540 aa).

Residues 29 to 32 (TLGP), 86 to 90 (DGTTT), G413, 477 to 479 (DAL), and D493 each bind ATP.

It belongs to the chaperonin (HSP60) family. In terms of assembly, forms a cylinder of 14 subunits composed of two heptameric rings stacked back-to-back. Interacts with the co-chaperonin GroES.

It localises to the cytoplasm. It carries out the reaction ATP + H2O + a folded polypeptide = ADP + phosphate + an unfolded polypeptide.. In terms of biological role, together with its co-chaperonin GroES, plays an essential role in assisting protein folding. The GroEL-GroES system forms a nano-cage that allows encapsulation of the non-native substrate proteins and provides a physical environment optimized to promote and accelerate protein folding. This is Chaperonin GroEL from Clostridium botulinum (strain Alaska E43 / Type E3).